Reading from the N-terminus, the 316-residue chain is MGNRHAKASSPQGFDVDRDAKKLNKACKGMGTNEAAIIEILSGRTSDERQQIKQKYKATYGKELEEVLKSELSGNFEKTALALLDRPSEYAARQLQKAMKGLGTDESVLIEVLCTRTNKEIIAIKEAYQRLFDRSLESDVKGDTSGNLKKILVSLLQANRNEGDDVDKDLAGQDAKDLYDAGEGRWGTDELAFNEVLAKRSYKQLRATFQAYQILIGKDIEEAIEEETSGDLQKAYLTLVRCAQDCEDYFAERLYKSMKGAGTDEETLIRIVVTRAEVDLQGIKAKFQEKYQKSLSDMVRSDTSGDFRKLLVALLH.

Gly-2 is lipidated: N-myristoyl glycine. Annexin repeat units follow at residues 14–85 (FDVD…ALLD), 86–157 (RPSE…SLLQ), 169–241 (DLAG…TLVR), and 245–316 (DCED…ALLH).

This sequence belongs to the annexin family. In terms of assembly, monomer and homodimer. In terms of tissue distribution, detected in epithelial cells in colon and jejunum (at protein level). Detected in epithelial cells in jejunum.

It localises to the apical cell membrane. The protein resides in the cell membrane. The protein localises to the cytoplasmic vesicle. Binds to membranes enriched in phosphatidylserine or phosphatidylglycerol in a calcium-dependent manner. Half-maximal membrane binding requires about 60 uM calcium. Does not bind to membranes that lack phospholipids with an acidic headgroup. In terms of biological role, binds to membranes enriched in phosphatidylserine or phosphatidylglycerol in a calcium-dependent manner, but requires higher calcium levels for membrane binding than isoform A. Half-maximal membrane binding requires about 320 uM calcium. The chain is Annexin A13 (ANXA13) from Homo sapiens (Human).